The primary structure comprises 73 residues: UPF0235 protein PERMA_1406 (73 aa).

The protein belongs to the UPF0235 family.

This Persephonella marina (strain DSM 14350 / EX-H1) protein is UPF0235 protein PERMA_1406.